An 80-amino-acid polypeptide reads, in one-letter code: Protein FAM229B (80 aa).

Residues 1–44 form a disordered region; the sequence is MPFRFGTQPRRFPVEGGDSSIGLEPGLSSSAACNGKEMSPTRQL.

It belongs to the FAM229 family.

This chain is Protein FAM229B (FAM229B), found in Macaca fascicularis (Crab-eating macaque).